The primary structure comprises 49 residues: Large ribosomal subunit protein bL33C (49 aa).

This sequence belongs to the bacterial ribosomal protein bL33 family.

This is Large ribosomal subunit protein bL33C from Bacillus pumilus (strain SAFR-032).